A 417-amino-acid polypeptide reads, in one-letter code: Tyrosine--tRNA ligase (417 aa).

Y39 serves as a coordination point for L-tyrosine. The 'HIGH' region signature appears at 44–53 (PTAASLHAGG). L-tyrosine-binding residues include Y176 and Q180. A 'KMSKS' region motif is present at residues 236 to 240 (KMGKS). K239 contacts ATP. The 68-residue stretch at 350–417 (LGLLTLLVRA…KKKHLLVRPV (68 aa)) folds into the S4 RNA-binding domain.

The protein belongs to the class-I aminoacyl-tRNA synthetase family. TyrS type 1 subfamily. As to quaternary structure, homodimer.

The protein resides in the cytoplasm. It carries out the reaction tRNA(Tyr) + L-tyrosine + ATP = L-tyrosyl-tRNA(Tyr) + AMP + diphosphate + H(+). Its function is as follows. Catalyzes the attachment of tyrosine to tRNA(Tyr) in a two-step reaction: tyrosine is first activated by ATP to form Tyr-AMP and then transferred to the acceptor end of tRNA(Tyr). The sequence is that of Tyrosine--tRNA ligase from Rhizobium meliloti (strain 1021) (Ensifer meliloti).